A 210-amino-acid chain; its full sequence is Cdc42 effector protein 2 (210 aa).

Ser-2 carries the N-acetylserine modification. Residues 30-44 (ISPPLGDFRHTIHIG) enclose the CRIB domain. Phosphoserine is present on residues Ser-31, Ser-101, and Ser-141. Positions 122-171 (PTAQAPPKPPRLHLETPQPSPQEGGSVDIWRIPETGSPNSGLTPESGAEE) are disordered.

It belongs to the BORG/CEP family. Interacts with RHOQ and CDC42 in a GTP-dependent manner, and with SEPT7. As to expression, highly expressed in the heart. Weakly expressed in the pancreas and liver.

It is found in the endomembrane system. It localises to the cytoplasm. Its subcellular location is the cytoskeleton. Its function is as follows. Probably involved in the organization of the actin cytoskeleton. May act downstream of CDC42 to induce actin filament assembly leading to cell shape changes. Induces pseudopodia formation in fibroblasts in a CDC42-dependent manner. The sequence is that of Cdc42 effector protein 2 (CDC42EP2) from Homo sapiens (Human).